A 1101-amino-acid polypeptide reads, in one-letter code: Selenocysteine insertion sequence-binding protein 2-like (1101 aa).

Disordered stretches follow at residues 154 to 206 (LGQV…AGPD), 240 to 295 (LWKS…PDSG), 320 to 387 (QKKP…SESL), 884 to 1010 (TSDG…ISVE), and 1030 to 1101 (TLQL…TQTT). Low complexity predominate over residues 255–265 (AESSSEQGASE). Position 276 is a phosphoserine (S276). Over residues 327–346 (KNQTFSRGGRQTEQRNNSQV) the composition is skewed to polar residues. Composition is skewed to basic and acidic residues over residues 356 to 371 (SSER…DNKH) and 892 to 908 (ENEK…EKPS). A compositionally biased stretch (low complexity) spans 925-939 (ATGSTTSATSAGKST). Residues 940-950 (ASDKEEVKPDD) show a composition bias toward basic and acidic residues. Positions 954–964 (ASQQSTETGSL) are enriched in polar residues. Residues 988-1002 (LEEEEDEDEEEEEDY) are compositionally biased toward acidic residues. Residues 1030–1039 (TLQLGKTLNG) show a composition bias toward polar residues. The segment covering 1040 to 1057 (SEEDNVEQSGEEEAEAPE) has biased composition (acidic residues). The span at 1070-1087 (ADQQASPGQQKSSNCSSL) shows a compositional bias: polar residues.

In terms of biological role, binds SECIS (Sec insertion sequence) elements present on selenocysteine (Sec) protein mRNAs, but does not promote Sec incorporation into selenoproteins in vitro. This is Selenocysteine insertion sequence-binding protein 2-like (SECISBP2L) from Homo sapiens (Human).